We begin with the raw amino-acid sequence, 270 residues long: MISKINFVKMHGLGNDFVVVNKRDLSSSYDLSQLAKNMADRHTGIGCDQFIIYEEHDDFYEMIIYNIDGSSAKLCGNATRCLAKLIYLDTGKKDITVMVGNKKLLCNVEDENNISVNVGKVSFNEVWMPSRDKIWELAERYMIDLKETICVDIGNPHLVIFSKLEPQDQKIVGEKLQAKELFADGVNVNFAEVKDNKIYLSVWERGAGLTLACGSGACGSFAAGLKLGFIHSPSTVVFKYGSLTMKEENGNIIMQGAATLVARGEYYCEQ.

Residues Asn15, Gln49, and Asn66 each coordinate substrate. The active-site Proton donor is Cys75. Residues 76 to 77 (GN), Asn155, Asn187, and 204 to 205 (ER) each bind substrate. The active-site Proton acceptor is the Cys213. Position 214–215 (214–215 (GS)) interacts with substrate.

The protein belongs to the diaminopimelate epimerase family. Homodimer.

Its subcellular location is the cytoplasm. It catalyses the reaction (2S,6S)-2,6-diaminopimelate = meso-2,6-diaminopimelate. It participates in amino-acid biosynthesis; L-lysine biosynthesis via DAP pathway; DL-2,6-diaminopimelate from LL-2,6-diaminopimelate: step 1/1. In terms of biological role, catalyzes the stereoinversion of LL-2,6-diaminopimelate (L,L-DAP) to meso-diaminopimelate (meso-DAP), a precursor of L-lysine and an essential component of the bacterial peptidoglycan. The polypeptide is Diaminopimelate epimerase (Rickettsia felis (strain ATCC VR-1525 / URRWXCal2) (Rickettsia azadi)).